Consider the following 229-residue polypeptide: Uracil-DNA glycosylase (229 aa).

Aspartate 70 (proton acceptor) is an active-site residue.

It belongs to the uracil-DNA glycosylase (UDG) superfamily. UNG family.

It is found in the cytoplasm. It catalyses the reaction Hydrolyzes single-stranded DNA or mismatched double-stranded DNA and polynucleotides, releasing free uracil.. Functionally, excises uracil residues from the DNA which can arise as a result of misincorporation of dUMP residues by DNA polymerase or due to deamination of cytosine. In Chlamydia abortus (strain DSM 27085 / S26/3) (Chlamydophila abortus), this protein is Uracil-DNA glycosylase.